Here is a 441-residue protein sequence, read N- to C-terminus: Nucleolar and spindle-associated protein 1 (441 aa).

Disordered regions lie at residues 47-186 (ARKG…PNFK) and 216-267 (MNEL…LGLK). Polar residues-rich tracts occupy residues 56 to 74 (ESQTSASSCDETEIQISNQ) and 100 to 116 (DSQQNHSEIKISNPTEF). The segment covering 117 to 126 (QNHEKQESQD) has biased composition (basic and acidic residues). S124 is modified (phosphoserine; by ATM). S135 is modified (phosphoserine). Basic and acidic residues predominate over residues 152–171 (RDSKVPSEGKKSLYTDESSK). T182 is modified (phosphothreonine). Residues 237 to 382 (GRLSVASTPI…HKGKLKPWGQ (146 aa)) are interaction with microtubules. S240 is subject to Phosphoserine. The segment covering 241-264 (VASTPISQRRSQGRSCGPASQSTL) has biased composition (polar residues). Position 244 is a phosphothreonine (T244). Residues S247, S255, S269, S276, and S311 each carry the phosphoserine modification. The segment at 286-319 (AATKDNEHKRSLTKTPARKSAHVTVSGGTPKGEA) is disordered. Phosphothreonine occurs at positions 314, 338, and 349. A phosphoserine mark is found at S352 and S363. The KEN box motif lies at 384–390 (KENNYLN). The tract at residues 401-427 (KTYKQPHLQTKEEQRKKREQERKEKKA) is disordered. A coiled-coil region spans residues 407-432 (HLQTKEEQRKKREQERKEKKAKVLGM). Residues 409–424 (QTKEEQRKKREQERKE) are compositionally biased toward basic and acidic residues. The residue at position 411 (K411) is an N6-acetyllysine.

The protein belongs to the NUSAP family. Interacts with DNA and microtubules. Microtubule bundling is inhibited by IPO7, KPNA2 and KPNB1 while association with DNA is also inhibited by IPO7 and KPNA2. In terms of processing, ubiquitinated. Ubiquitination by FZR1 may lead to proteasome-dependent degradation of this protein. Phosphorylation by ATM in G2/M-phase induces mitotic arrest.

It is found in the cytoplasm. The protein localises to the nucleus. Its subcellular location is the nucleolus. It localises to the cytoskeleton. The protein resides in the spindle. It is found in the chromosome. Microtubule-associated protein with the capacity to bundle and stabilize microtubules. May associate with chromosomes and promote the organization of mitotic spindle microtubules around them. This is Nucleolar and spindle-associated protein 1 (NUSAP1) from Homo sapiens (Human).